Here is a 37-residue protein sequence, read N- to C-terminus: Large ribosomal subunit protein bL36c (37 aa).

The protein belongs to the bacterial ribosomal protein bL36 family.

It is found in the plastid. The protein resides in the chloroplast. This Stigeoclonium helveticum (Green alga) protein is Large ribosomal subunit protein bL36c.